Here is a 2552-residue protein sequence, read N- to C-terminus: Probable polyketide synthase 40 (2552 aa).

In terms of domain architecture, Ketosynthase family 3 (KS3) spans 13–443 (CNKVAIIGIG…GSNCCLIVSS (431 aa)). Catalysis depends on for beta-ketoacyl synthase activity residues Cys179, His320, and His362. The acyl/malonyl transferase stretch occupies residues 629 to 662 (GIKPSIIVGHSLGEISSSYCSGMIDLDTFCYLIY). Ser639 serves as the catalytic For acyl/malonyl transferase activity. The interval 928–1063 (INHLGISNSN…ANFQLFSRGQ (136 aa)) is N-terminal hotdog fold. Residues 928–1235 (INHLGISNSN…FKSTTKIKDS (308 aa)) form the PKS/mFAS DH domain. His962 functions as the Proton acceptor; for dehydratase activity in the catalytic mechanism. A C-terminal hotdog fold region spans residues 1087–1235 (NLTKLSKQEL…FKSTTKIKDS (149 aa)). The Proton donor; for dehydratase activity role is filled by Asp1149. The Carrier domain occupies 2467 to 2546 (DNVELTVDQL…SFIQLVKNSI (80 aa)). An O-(pantetheine 4'-phosphoryl)serine modification is found at Ser2505.

It depends on pantetheine 4'-phosphate as a cofactor.

In terms of biological role, probable polyketide synthase. The sequence is that of Probable polyketide synthase 40 (pks40) from Dictyostelium discoideum (Social amoeba).